The primary structure comprises 191 residues: MKTGSVEAGEQASEDATPRRGKKLNRGILILDLVLRVFGAICTLGSAVAMGTTSQTLPSSSQFFRFRAKYNDLPMFMFFAIANSIVCAYLVLSLRLSIFHIIRSAGIITRIILVTFDMVMLVLLTCGASAATSIVYLAHKGNASANWLPFCVRFSHFCNRISGSLIGSFFSIIIFMLLVILSAVSQFSICN.

Topologically, residues 1–27 are cytoplasmic; that stretch reads MKTGSVEAGEQASEDATPRRGKKLNRG. A helical transmembrane segment spans residues 28–48; sequence ILILDLVLRVFGAICTLGSAV. The Extracellular portion of the chain corresponds to 49-72; sequence AMGTTSQTLPSSSQFFRFRAKYND. The chain crosses the membrane as a helical span at residues 73–93; the sequence is LPMFMFFAIANSIVCAYLVLS. At 94–110 the chain is on the cytoplasmic side; sequence LRLSIFHIIRSAGIITR. Residues 111 to 131 form a helical membrane-spanning segment; sequence IILVTFDMVMLVLLTCGASAA. The Extracellular portion of the chain corresponds to 132–160; that stretch reads TSIVYLAHKGNASANWLPFCVRFSHFCNR. An N-linked (GlcNAc...) asparagine glycan is attached at Asn-142. The helical transmembrane segment at 161-181 threads the bilayer; that stretch reads ISGSLIGSFFSIIIFMLLVIL. Residues 182–191 lie on the Cytoplasmic side of the membrane; it reads SAVSQFSICN.

The protein belongs to the Casparian strip membrane proteins (CASP) family. Homodimer and heterodimers.

It is found in the cell membrane. Regulates membrane-cell wall junctions and localized cell wall deposition. Required for establishment of the Casparian strip membrane domain (CSD) and the subsequent formation of Casparian strips, a cell wall modification of the root endodermis that determines an apoplastic barrier between the intraorganismal apoplasm and the extraorganismal apoplasm and prevents lateral diffusion. In Ricinus communis (Castor bean), this protein is Casparian strip membrane protein 4.